A 318-amino-acid chain; its full sequence is Small ribosomal subunit protein uS2 (318 aa).

This sequence belongs to the universal ribosomal protein uS2 family.

In Mesomycoplasma hyopneumoniae (strain J / ATCC 25934 / NCTC 10110) (Mycoplasma hyopneumoniae), this protein is Small ribosomal subunit protein uS2.